Reading from the N-terminus, the 160-residue chain is SsrA-binding protein (160 aa).

The span at aspartate 137–arginine 153 shows a compositional bias: basic and acidic residues. The segment at aspartate 137–arginine 160 is disordered.

This sequence belongs to the SmpB family.

Its subcellular location is the cytoplasm. Required for rescue of stalled ribosomes mediated by trans-translation. Binds to transfer-messenger RNA (tmRNA), required for stable association of tmRNA with ribosomes. tmRNA and SmpB together mimic tRNA shape, replacing the anticodon stem-loop with SmpB. tmRNA is encoded by the ssrA gene; the 2 termini fold to resemble tRNA(Ala) and it encodes a 'tag peptide', a short internal open reading frame. During trans-translation Ala-aminoacylated tmRNA acts like a tRNA, entering the A-site of stalled ribosomes, displacing the stalled mRNA. The ribosome then switches to translate the ORF on the tmRNA; the nascent peptide is terminated with the 'tag peptide' encoded by the tmRNA and targeted for degradation. The ribosome is freed to recommence translation, which seems to be the essential function of trans-translation. This chain is SsrA-binding protein, found in Edwardsiella ictaluri (strain 93-146).